A 351-amino-acid chain; its full sequence is Methionine import ATP-binding protein MetN (351 aa).

In terms of domain architecture, ABC transporter spans 4-249; it reads VQLDHVSVTF…PKAELTQKFV (246 aa). 41-48 is a binding site for ATP; sequence GFSGAGKS.

This sequence belongs to the ABC transporter superfamily. Methionine importer (TC 3.A.1.24) family. In terms of assembly, the complex is composed of two ATP-binding proteins (MetN), two transmembrane proteins (MetI) and a solute-binding protein (MetQ).

It localises to the cell membrane. The enzyme catalyses L-methionine(out) + ATP + H2O = L-methionine(in) + ADP + phosphate + H(+). The catalysed reaction is D-methionine(out) + ATP + H2O = D-methionine(in) + ADP + phosphate + H(+). Part of the ABC transporter complex MetNIQ involved in methionine import. Responsible for energy coupling to the transport system. The polypeptide is Methionine import ATP-binding protein MetN (Lactobacillus delbrueckii subsp. bulgaricus (strain ATCC 11842 / DSM 20081 / BCRC 10696 / JCM 1002 / NBRC 13953 / NCIMB 11778 / NCTC 12712 / WDCM 00102 / Lb 14)).